A 43-amino-acid polypeptide reads, in one-letter code: Protein PsbN (43 aa).

The chain crosses the membrane as a helical span at residues 7–27 (ITIFLSCFLVGVTGYALYTAF).

This sequence belongs to the PsbN family.

It is found in the plastid. It localises to the chloroplast thylakoid membrane. Its function is as follows. May play a role in photosystem I and II biogenesis. The sequence is that of Protein PsbN from Klebsormidium bilatum (Filamentous green alga).